A 66-amino-acid polypeptide reads, in one-letter code: Early E3 7.7 kDa protein (66 aa).

Asn7 and Asn24 each carry an N-linked (GlcNAc...) asparagine; by host glycan. A helical membrane pass occupies residues 44-64 (ITILIVIGILILSVILYFLFS).

The protein localises to the host nucleus membrane. This Human adenovirus B serotype 7 (HAdV-7) protein is Early E3 7.7 kDa protein.